The sequence spans 309 residues: MRIFFASSDVIALEVLKKISDQYDVVGVLTAPDKPSGRGLSLKVNDIKREALSRKITVLQPVVLDADVINLVKSLEPELMLVFSYGKIFKQEFLDIFPVGCINIHPSLLPKYRGPSPIQTAILNGDSISGITVQKMTLEMDSGNILAQSQFEIKSFNTSVDIFEYVSLNSFDLVIEALNKLLKGDIGIVQDKNNATYCSFLGKEHRTIDFKLSAFDIKNKINAYNPWPLARARLDNNEIIFHRADFISTNDYDDQVIGKIIAFDPSKGLLVKTGDGILVVLELQRIGKKVLDCVSFYHGNRDLIGKVFS.

107 to 110 is a (6S)-5,6,7,8-tetrahydrofolate binding site; the sequence is SLLP.

This sequence belongs to the Fmt family.

It catalyses the reaction L-methionyl-tRNA(fMet) + (6R)-10-formyltetrahydrofolate = N-formyl-L-methionyl-tRNA(fMet) + (6S)-5,6,7,8-tetrahydrofolate + H(+). Attaches a formyl group to the free amino group of methionyl-tRNA(fMet). The formyl group appears to play a dual role in the initiator identity of N-formylmethionyl-tRNA by promoting its recognition by IF2 and preventing the misappropriation of this tRNA by the elongation apparatus. The sequence is that of Methionyl-tRNA formyltransferase from Borrelia duttonii (strain Ly).